The sequence spans 209 residues: Cytidylate kinase (209 aa).

7–15 (GVAASGKSS) is a binding site for ATP.

Belongs to the cytidylate kinase family. Type 1 subfamily.

It is found in the cytoplasm. It carries out the reaction CMP + ATP = CDP + ADP. It catalyses the reaction dCMP + ATP = dCDP + ADP. This Deinococcus geothermalis (strain DSM 11300 / CIP 105573 / AG-3a) protein is Cytidylate kinase.